Consider the following 701-residue polypeptide: Polyribonucleotide nucleotidyltransferase (701 aa).

Mg(2+) is bound by residues aspartate 487 and aspartate 493. Residues 554-613 enclose the KH domain; sequence PTMIAMKIDTDKIRDVIGKGGATIRAICEETKASIDIEDDGSIKIFGETKEAAEAARQRV. Positions 623-691 constitute an S1 motif domain; it reads GKIYVGKVER…NRGRIKLSIK (69 aa).

Belongs to the polyribonucleotide nucleotidyltransferase family. As to quaternary structure, component of the RNA degradosome, which is a multiprotein complex involved in RNA processing and mRNA degradation. Requires Mg(2+) as cofactor.

Its subcellular location is the cytoplasm. It carries out the reaction RNA(n+1) + phosphate = RNA(n) + a ribonucleoside 5'-diphosphate. Functionally, involved in mRNA degradation. Catalyzes the phosphorolysis of single-stranded polyribonucleotides processively in the 3'- to 5'-direction. This chain is Polyribonucleotide nucleotidyltransferase, found in Pseudomonas putida (strain W619).